Reading from the N-terminus, the 153-residue chain is MLRLLLLPLFLFTLSMACMGQTFQYSRGWTNGKRAPPAALVTNGHNLGLLDIYDIQDRPTDIKLERCLLQLQHFVGNALLHRSFANGLAYSASRPDPETDVRSINIHSRPGSGNNNIENSLYPNVNHRQSNELFEALNAPGPDAVEPNDYGKH.

The first 20 residues, 1-20 (MLRLLLLPLFLFTLSMACMG), serve as a signal peptide directing secretion. Position 21 is a pyrrolidone carboxylic acid (glutamine 21). Asparagine 31 is modified (asparagine amide). The propeptide occupies 64-153 (LERCLLQLQH…AVEPNDYGKH (90 aa)).

It belongs to the corazonin family. In terms of tissue distribution, expression is restricted to 24 neurons in the larval CNS (8 in the brain and 16 in the ventral nerve cord) and 12-16 neurons in the pars lateralis of the adult brain.

The protein resides in the secreted. Cardioactive peptide. Corazonin is probably involved in the physiological regulation of the heart beat. Clock (Clk) and cycle (cyc) proteins negatively regulate Crz transcription in a cell-specific manner. This chain is Pro-corazonin (Crz), found in Drosophila virilis (Fruit fly).